A 441-amino-acid chain; its full sequence is UDP-N-acetylglucosamine--N-acetylmuramyl-(pentapeptide) pyrophosphoryl-undecaprenol N-acetylglucosamine transferase (441 aa).

UDP-N-acetyl-alpha-D-glucosamine contacts are provided by residues 28–30 (TGG), asparagine 140, arginine 176, serine 204, isoleucine 257, and glutamine 302.

The protein belongs to the glycosyltransferase 28 family. MurG subfamily.

It is found in the cell inner membrane. The enzyme catalyses di-trans,octa-cis-undecaprenyl diphospho-N-acetyl-alpha-D-muramoyl-L-alanyl-D-glutamyl-meso-2,6-diaminopimeloyl-D-alanyl-D-alanine + UDP-N-acetyl-alpha-D-glucosamine = di-trans,octa-cis-undecaprenyl diphospho-[N-acetyl-alpha-D-glucosaminyl-(1-&gt;4)]-N-acetyl-alpha-D-muramoyl-L-alanyl-D-glutamyl-meso-2,6-diaminopimeloyl-D-alanyl-D-alanine + UDP + H(+). It functions in the pathway cell wall biogenesis; peptidoglycan biosynthesis. Cell wall formation. Catalyzes the transfer of a GlcNAc subunit on undecaprenyl-pyrophosphoryl-MurNAc-pentapeptide (lipid intermediate I) to form undecaprenyl-pyrophosphoryl-MurNAc-(pentapeptide)GlcNAc (lipid intermediate II). This Xanthomonas oryzae pv. oryzae (strain KACC10331 / KXO85) protein is UDP-N-acetylglucosamine--N-acetylmuramyl-(pentapeptide) pyrophosphoryl-undecaprenol N-acetylglucosamine transferase.